Consider the following 197-residue polypeptide: Elongation factor Ts (197 aa).

The interval 81–84 is involved in Mg(2+) ion dislocation from EF-Tu; that stretch reads TDFV.

The protein belongs to the EF-Ts family.

The protein localises to the cytoplasm. Associates with the EF-Tu.GDP complex and induces the exchange of GDP to GTP. It remains bound to the aminoacyl-tRNA.EF-Tu.GTP complex up to the GTP hydrolysis stage on the ribosome. In Petrotoga mobilis (strain DSM 10674 / SJ95), this protein is Elongation factor Ts.